We begin with the raw amino-acid sequence, 124 residues long: Small ribosomal subunit protein uS12 (124 aa).

Asp-89 carries the post-translational modification 3-methylthioaspartic acid. The residue at position 108 (Lys-108) is an N6-acetyllysine.

It belongs to the universal ribosomal protein uS12 family. Part of the 30S ribosomal subunit. Contacts proteins S8 and S17. May interact with IF1 in the 30S initiation complex.

With S4 and S5 plays an important role in translational accuracy. In terms of biological role, interacts with and stabilizes bases of the 16S rRNA that are involved in tRNA selection in the A site and with the mRNA backbone. Located at the interface of the 30S and 50S subunits, it traverses the body of the 30S subunit contacting proteins on the other side and probably holding the rRNA structure together. The combined cluster of proteins S8, S12 and S17 appears to hold together the shoulder and platform of the 30S subunit. The protein is Small ribosomal subunit protein uS12 of Escherichia coli (strain K12 / MC4100 / BW2952).